The sequence spans 510 residues: GPI mannosyltransferase 4 (510 aa).

A run of 3 helical transmembrane segments spans residues 7–27 (LILALSLLLRLHLAISPSYIH), 62–82 (FVPLWILYTAPLSVLNFLWKG), and 89–109 (AYWFIRAGHALAYWILGDMAL). A glycan (N-linked (GlcNAc...) asparagine) is linked at Asn-142. A helical membrane pass occupies residues 179-199 (LGLLIVIGTWNRVTFPLWLIV). Asn-212 is a glycosylation site (N-linked (GlcNAc...) asparagine). A run of 3 helical transmembrane segments spans residues 213–233 (ISSLILLIASVALTAFFVIHV), 268–288 (LTHLVSNLPVLLGPLLILLRT), and 339–359 (FTSAIFLLSYVFNIIMGFLMG).

The protein belongs to the glycosyltransferase 22 family. PIGZ subfamily.

The protein resides in the endoplasmic reticulum membrane. Its pathway is glycolipid biosynthesis; glycosylphosphatidylinositol-anchor biosynthesis. In terms of biological role, alpha-1,2-mannosyltransferase involved in glycosylphosphatidylinositol-anchor biosynthesis. Transfers a fourth mannose to trimannosyl-GPIs during GPI precursor assembly. The presence of a fourth mannose in GPI is essential in fungi. The polypeptide is GPI mannosyltransferase 4 (SMP3) (Yarrowia lipolytica (strain CLIB 122 / E 150) (Yeast)).